A 279-amino-acid chain; its full sequence is MTERFDCHHCEDSLFGRKYVLREEQPYCVACFEALFASTCEECGKLIGCDCKDLSYKDRHWHEACFHCSRCRGSLVDKPFAAKEDQLLCTDCYSQEYSSRCQECKKSIMPGTRKMEYKGSSWHETCFICHRCQQPIGTKSFIPKDSENFCVPCYERQYALQCVQCKKPITTGGVTYREQPWHRECFVCTACKKPLSGQRFTSRDEFAYCLGCFCDLYAKKCAGCANPISGLGGTKYISFEERQWHNDCFNCKKCSLSLVGRGFLTERDDILCPDCGKDI.

The C4-type zinc finger occupies 7 to 31; the sequence is CHHCEDSLFGRKYVLREEQPYCVAC. 3 LIM zinc-binding domains span residues 40 to 92, 101 to 153, and 162 to 212; these read CEEC…CTDC, CQEC…CVPC, and CVQC…CLGC. A Glycyl lysine isopeptide (Lys-Gly) (interchain with G-Cter in SUMO2) cross-link involves residue Lys78. Residues Lys167 and Lys220 each participate in a glycyl lysine isopeptide (Lys-Gly) (interchain with G-Cter in SUMO2) cross-link. Residues 221 to 275 enclose the LIM zinc-binding 4 domain; it reads CAGCANPISGLGGTKYISFEERQWHNDCFNCKKCSLSLVGRGFLTERDDILCPDC. At Ser238 the chain carries Phosphoserine.

In terms of assembly, interacts with ZNF638 and TTN/titin. Interacts with E4F1. Interacts with GRB7. Interacts with SIRT1 and FOXO1. Interacts with CEFIP and calcineurin. Interacts with FOXK1.

Its subcellular location is the cytoplasm. It is found in the nucleus. The protein localises to the myofibril. It localises to the sarcomere. The protein resides in the z line. May function as a molecular transmitter linking various signaling pathways to transcriptional regulation. Negatively regulates the transcriptional repressor E4F1 and may function in cell growth. Inhibits the transcriptional activity of FOXO1 and its apoptotic function by enhancing the interaction of FOXO1 with SIRT1 and FOXO1 deacetylation. Negatively regulates the calcineurin/NFAT signaling pathway in cardiomyocytes. The protein is Four and a half LIM domains protein 2 (FHL2) of Bos taurus (Bovine).